A 536-amino-acid chain; its full sequence is MNSNRSLLVMGLLLVSFLIFTQWQQDFNPEIQAQKQAQQQSRDVPHATNTANAITEHMTKGKTITVESDVLRLVIDTLGGDVIESDLLAHKASLDSTDPLKLLTTEGLIYTAQSGLVGKNGIDTHIGRAPYQVTQDHFTLAKGQNEIVVPMTFEQDGVMYTKTFTLKRGSYDVAVSFDIQNNSANTIEVQPYGQIKHSLLDSSGNLAMPTYTGGAYSSSETNYKKYSFDEMTKANLNIDTKGGWVALLQHYFVSAWVPNQDASNTLYSRTHNGVATIGYRGPITTVKPNTKTTITSQLWTGPKDQKEMAQAATHLELTVDYGWAWFIAKPLFWLLIFIHSIIGNWGLAIMGVTLVVKSLLYPLTKAQYTSMAKMRMLQPKLQELRERYGDDRQQMSQEMMKLYKQEKVNPMGGCLPLILQMPIFIALYWTFMEAVELRHAPFFGWIQDLSAQDPYYIFPVLMGLSMFLLQKMSPTAVADPTQLKVMTFMPVIFTVFFLWFPSGLVLYWLTSNCITIVQQWLIYRNLEKKGLHTRKK.

A run of 5 helical transmembrane segments spans residues 7–27 (LLVM…QQDF), 332–352 (FWLL…IMGV), 411–431 (MGGC…YWTF), 449–469 (LSAQ…MFLL), and 488–508 (FMPV…VLYW).

Belongs to the OXA1/ALB3/YidC family. Type 1 subfamily. In terms of assembly, interacts with the Sec translocase complex via SecD. Specifically interacts with transmembrane segments of nascent integral membrane proteins during membrane integration.

Its subcellular location is the cell inner membrane. Functionally, required for the insertion and/or proper folding and/or complex formation of integral membrane proteins into the membrane. Involved in integration of membrane proteins that insert both dependently and independently of the Sec translocase complex, as well as at least some lipoproteins. Aids folding of multispanning membrane proteins. The chain is Membrane protein insertase YidC from Haemophilus ducreyi (strain 35000HP / ATCC 700724).